Consider the following 519-residue polypeptide: MLNARFLVPRLLCLQGRTTSYSTAAALPNPIPNPEIRYNQLFINNEWHDAVSKKTFPTVNPTTGEVIGHVAEGDRADVDLAVRAAREAFRLGSPWRRMDASERGRLLNRLADLVERDRVYLASLETLDNGKPFQESYVLDLDEVIKVYRYLAGWADKWHGKTIPMDGEHFCFTRHEPVGVCGQIIPWNFPLVMQGWKLAPALATGNTVVMKVAEQTPLSALYLASLIKEAGFPPGVVNIITGYGPTAGAAIAQHMDVDKVAFTGSTEVGHLIQKAAGDSNLKRVTLELGGKSPSIVLADADMDHAVDQCHEALFFNMGQCCCAGSRTFVEESIYHEFLERTVEKAKKRKVGNPFELDTQQGPQVDKEQFEKILGYIRLGQKEGAKLLCGGERFGERGFFIKPTVFGNVQDDMRIAREEIFGPVQPLFKFKKIEEVIQRANNTRYGLAAAVFTRDLDKALYFSQALQAGTVWVNTYNIVTCHTPFGGFKESGNGRELGEDGLKAYTEVKTVTIKVSEKNS.

A mitochondrion-targeting transit peptide spans 1–19; that stretch reads MLNARFLVPRLLCLQGRTT. K53 carries the N6-acetyllysine modification. K54 carries the N6-acetyllysine; alternate modification. An N6-succinyllysine; alternate modification is found at K54. 264–269 provides a ligand contact to NAD(+); sequence GSTEVG. Catalysis depends on E287, which acts as the Proton acceptor. C321 functions as the Nucleophile in the catalytic mechanism. N6-acetyllysine; alternate is present on residues K366, K385, K401, and K428. N6-succinyllysine; alternate is present on residues K366, K385, K401, and K428. K431 bears the N6-acetyllysine mark.

Belongs to the aldehyde dehydrogenase family. Homotetramer.

The protein resides in the mitochondrion matrix. The enzyme catalyses an aldehyde + NAD(+) + H2O = a carboxylate + NADH + 2 H(+). It functions in the pathway alcohol metabolism; ethanol degradation; acetate from ethanol: step 2/2. ALDHs play a major role in the detoxification of alcohol-derived acetaldehyde. They are involved in the metabolism of corticosteroids, biogenic amines, neurotransmitters, and lipid peroxidation. This chain is Aldehyde dehydrogenase X, mitochondrial (Aldh1b1), found in Rattus norvegicus (Rat).